The chain runs to 82 residues: MKTLLLTLVVVTIVCLDLGYTLKCNQLIPPFYKTCAAGKNLCYKMFMVAAQRFPVKRGCIDVCPKSSLLVKYVCCNTDRCNN.

Residues 1–21 (MKTLLLTLVVVTIVCLDLGYT) form the signal peptide. 4 disulfide bridges follow: cysteine 24–cysteine 42, cysteine 35–cysteine 59, cysteine 63–cysteine 74, and cysteine 75–cysteine 80.

The protein belongs to the three-finger toxin family. Short-chain subfamily. Type IA cytotoxin sub-subfamily. In terms of assembly, monomer in solution; Homodimer and oligomer in the presence of negatively charged lipids forming a pore with a size ranging between 20 and 30 Angstroms. In terms of tissue distribution, expressed by the venom gland.

Its subcellular location is the secreted. It is found in the target cell membrane. In terms of biological role, shows cytolytic activity on many different cells by forming pore in lipid membranes. In vivo, increases heart rate or kills the animal by cardiac arrest. In addition, it binds to heparin with high affinity, interacts with Kv channel-interacting protein 1 (KCNIP1) in a calcium-independent manner, and binds to integrin alpha-V/beta-3 (ITGAV/ITGB3) with moderate affinity. The polypeptide is Cytotoxin 6 (Naja atra (Chinese cobra)).